We begin with the raw amino-acid sequence, 209 residues long: Small ribosomal subunit protein uS3 (209 aa).

The KH type-2 domain maps to 38–107 (IRNFIKKNYN…KFGIDIIELK (70 aa)).

This sequence belongs to the universal ribosomal protein uS3 family. As to quaternary structure, part of the 30S ribosomal subunit. Forms a tight complex with proteins S10 and S14.

Functionally, binds the lower part of the 30S subunit head. Binds mRNA in the 70S ribosome, positioning it for translation. The chain is Small ribosomal subunit protein uS3 from Fervidobacterium nodosum (strain ATCC 35602 / DSM 5306 / Rt17-B1).